A 100-amino-acid chain; its full sequence is Aspartyl/glutamyl-tRNA(Asn/Gln) amidotransferase subunit C (100 aa).

It belongs to the GatC family. As to quaternary structure, heterotrimer of A, B and C subunits.

It catalyses the reaction L-glutamyl-tRNA(Gln) + L-glutamine + ATP + H2O = L-glutaminyl-tRNA(Gln) + L-glutamate + ADP + phosphate + H(+). The catalysed reaction is L-aspartyl-tRNA(Asn) + L-glutamine + ATP + H2O = L-asparaginyl-tRNA(Asn) + L-glutamate + ADP + phosphate + 2 H(+). In terms of biological role, allows the formation of correctly charged Asn-tRNA(Asn) or Gln-tRNA(Gln) through the transamidation of misacylated Asp-tRNA(Asn) or Glu-tRNA(Gln) in organisms which lack either or both of asparaginyl-tRNA or glutaminyl-tRNA synthetases. The reaction takes place in the presence of glutamine and ATP through an activated phospho-Asp-tRNA(Asn) or phospho-Glu-tRNA(Gln). The protein is Aspartyl/glutamyl-tRNA(Asn/Gln) amidotransferase subunit C of Streptococcus agalactiae serotype III (strain NEM316).